A 463-amino-acid polypeptide reads, in one-letter code: Gamma-aminobutyric acid receptor subunit alpha-5 (463 aa).

The signal sequence occupies residues 1-25 (MDNGMLSRFIMTQTLLVFCISMTLS). Residues 26 to 260 (SHFGFSQMPT…FHLKRKIGYF (235 aa)) are Extracellular-facing. Asn-45 carries N-linked (GlcNAc...) asparagine glycosylation. Arg-101 is a binding site for 4-aminobutanoate. Asn-145 is a glycosylation site (N-linked (GlcNAc...) asparagine). Thr-164 is a binding site for 4-aminobutanoate. Cys-173 and Cys-187 are joined by a disulfide. 2 N-linked (GlcNAc...) asparagine glycosylation sites follow: Asn-207 and Asn-236. The next 3 membrane-spanning stretches (helical) occupy residues 261 to 281 (VIQTYLPCIMTVILSQVSFWL), 287 to 308 (PARTVFGVTTVLTMTTLSISAR), and 319 to 340 (AMDWFIAVCYAFVFSALIEFAT). Residues 341 to 428 (VNYFTKRGWA…TYNSISKIDK (88 aa)) are Cytoplasmic-facing. A Glycyl lysine isopeptide (Lys-Gly) (interchain with G-Cter in ubiquitin) cross-link involves residue Lys-355. The segment at 387-408 (PNIPKEQPPAGTANAPTVSIKA) is disordered. The chain crosses the membrane as a helical span at residues 429–449 (MSRIVFPILFGTFNLVYWATY).

Belongs to the ligand-gated ion channel (TC 1.A.9) family. Gamma-aminobutyric acid receptor (TC 1.A.9.5) subfamily. GABRA5 sub-subfamily. Heteropentamer, formed by a combination of alpha (GABRA1-6), beta (GABRB1-3), gamma (GABRG1-3), delta (GABRD), epsilon (GABRE), rho (GABRR1-3), pi (GABRP) and theta (GABRQ) chains, each subunit exhibiting distinct physiological and pharmacological properties. In terms of tissue distribution, expressed in brain, in hippocampal pyramidal neurons.

The protein resides in the postsynaptic cell membrane. It is found in the cell membrane. It catalyses the reaction chloride(in) = chloride(out). Functionally, alpha subunit of the heteropentameric ligand-gated chloride channel gated by gamma-aminobutyric acid (GABA), a major inhibitory neurotransmitter in the brain. GABA-gated chloride channels, also named GABA(A) receptors (GABAAR), consist of five subunits arranged around a central pore and contain GABA active binding site(s) located at the alpha and beta subunit interface(s). When activated by GABA, GABAARs selectively allow the flow of chloride anions across the cell membrane down their electrochemical gradient. GABAARs containing alpha-5/GABRA5 are mainly extrasynaptic and contribute to the tonic GABAergic inhibition of the hippocampus. Extrasynaptic alpha-5-containing GABAARs in CA1 pyramidal neurons play a role in learning and memory processes. The chain is Gamma-aminobutyric acid receptor subunit alpha-5 from Mus musculus (Mouse).